We begin with the raw amino-acid sequence, 415 residues long: Runt-related transcription factor 3 (415 aa).

Disordered regions lie at residues Met1 to Ala48, Gly176 to Pro266, and Asn375 to Tyr415. A Runt domain is found at Ser54 to Arg182. The span at Lys186–Arg205 shows a compositional bias: basic and acidic residues. Residue Lys192 forms a Glycyl lysine isopeptide (Lys-Gly) (interchain with G-Cter in SUMO2) linkage. The segment covering Thr209–Asn240 has biased composition (polar residues). Ser243 is subject to Phosphoserine. Over residues Ser393 to Ser402 the composition is skewed to polar residues. Over residues Arg406–Tyr415 the composition is skewed to basic and acidic residues.

In terms of assembly, heterodimer with CBFB. RUNX3 binds DNA as a monomer and through the Runt domain. DNA-binding is increased by heterodimerization. Interacts with TLE1 and SUV39H1. The tyrosine phosphorylated form (via runt domain) interacts with SRC (via protein kinase domain). Interacts with FYN and LCK. Interacts with FOXP3. Interacts with ZFHX3. Interacts with TBX21. Phosphorylated on tyrosine residues by SRC. Phosphorylated by LCK and FYN. In terms of tissue distribution, expressed in gastric cancer tissues (at protein level).

The protein resides in the nucleus. Its subcellular location is the cytoplasm. Its function is as follows. Forms the heterodimeric complex core-binding factor (CBF) with CBFB. RUNX members modulate the transcription of their target genes through recognizing the core consensus binding sequence 5'-TGTGGT-3', or very rarely, 5'-TGCGGT-3', within their regulatory regions via their runt domain, while CBFB is a non-DNA-binding regulatory subunit that allosterically enhances the sequence-specific DNA-binding capacity of RUNX. The heterodimers bind to the core site of a number of enhancers and promoters, including murine leukemia virus, polyomavirus enhancer, T-cell receptor enhancers, LCK, IL3 and GM-CSF promoters. May be involved in the control of cellular proliferation and/or differentiation. In association with ZFHX3, up-regulates CDKN1A promoter activity following TGF-beta stimulation. CBF complexes repress ZBTB7B transcription factor during cytotoxic (CD8+) T cell development. They bind to RUNX-binding sequence within the ZBTB7B locus acting as transcriptional silencer and allowing for cytotoxic T cell differentiation. CBF complexes binding to the transcriptional silencer is essential for recruitment of nuclear protein complexes that catalyze epigenetic modifications to establish epigenetic ZBTB7B silencing. Necessary for the development and survival of sensory neurons expressing parvalbumin. This is Runt-related transcription factor 3 (RUNX3) from Homo sapiens (Human).